We begin with the raw amino-acid sequence, 201 residues long: CASP-like protein 2B2 (201 aa).

The Cytoplasmic portion of the chain corresponds to Met-1–Arg-28. A helical membrane pass occupies residues Val-29 to Val-49. Topologically, residues Ala-50–Lys-71 are extracellular. A helical transmembrane segment spans residues Ala-72–Val-92. The Cytoplasmic segment spans residues Cys-93 to Pro-108. The chain crosses the membrane as a helical span at residues Leu-109–Ala-129. The Extracellular portion of the chain corresponds to Ala-130–Ala-166. A helical membrane pass occupies residues Ser-167–Phe-187. Topologically, residues Arg-188–Trp-201 are cytoplasmic.

Belongs to the Casparian strip membrane proteins (CASP) family. Homodimer and heterodimers.

The protein resides in the cell membrane. This Arabidopsis lyrata subsp. lyrata (Lyre-leaved rock-cress) protein is CASP-like protein 2B2.